Reading from the N-terminus, the 477-residue chain is tRNA-2-methylthio-N(6)-dimethylallyladenosine synthase (477 aa).

The 118-residue stretch at 3–120 (KKLHIKTWGC…LPAMIKQVQE (118 aa)) folds into the MTTase N-terminal domain. 6 residues coordinate [4Fe-4S] cluster: cysteine 12, cysteine 49, cysteine 83, cysteine 157, cysteine 161, and cysteine 164. In terms of domain architecture, Radical SAM core spans 143 to 375 (RAEGATAFVS…QHVINNQSMQ (233 aa)). Residues 378-441 (RAMLGSTQRI…PNSLRGRFIR (64 aa)) form the TRAM domain.

It belongs to the methylthiotransferase family. MiaB subfamily. As to quaternary structure, monomer. The cofactor is [4Fe-4S] cluster.

It localises to the cytoplasm. It carries out the reaction N(6)-dimethylallyladenosine(37) in tRNA + (sulfur carrier)-SH + AH2 + 2 S-adenosyl-L-methionine = 2-methylsulfanyl-N(6)-dimethylallyladenosine(37) in tRNA + (sulfur carrier)-H + 5'-deoxyadenosine + L-methionine + A + S-adenosyl-L-homocysteine + 2 H(+). Functionally, catalyzes the methylthiolation of N6-(dimethylallyl)adenosine (i(6)A), leading to the formation of 2-methylthio-N6-(dimethylallyl)adenosine (ms(2)i(6)A) at position 37 in tRNAs that read codons beginning with uridine. In Aeromonas salmonicida (strain A449), this protein is tRNA-2-methylthio-N(6)-dimethylallyladenosine synthase.